Reading from the N-terminus, the 430-residue chain is Enolase (430 aa).

Gln-165 provides a ligand contact to (2R)-2-phosphoglycerate. Glu-207 serves as the catalytic Proton donor. Mg(2+)-binding residues include Asp-244, Glu-287, and Asp-314. The (2R)-2-phosphoglycerate site is built by Lys-339, Arg-368, Ser-369, and Lys-390. Lys-339 serves as the catalytic Proton acceptor.

Belongs to the enolase family. As to quaternary structure, component of the RNA degradosome, a multiprotein complex involved in RNA processing and mRNA degradation. The cofactor is Mg(2+).

Its subcellular location is the cytoplasm. The protein resides in the secreted. The protein localises to the cell surface. It carries out the reaction (2R)-2-phosphoglycerate = phosphoenolpyruvate + H2O. It functions in the pathway carbohydrate degradation; glycolysis; pyruvate from D-glyceraldehyde 3-phosphate: step 4/5. Functionally, catalyzes the reversible conversion of 2-phosphoglycerate (2-PG) into phosphoenolpyruvate (PEP). It is essential for the degradation of carbohydrates via glycolysis. The chain is Enolase from Stenotrophomonas maltophilia (strain R551-3).